A 544-amino-acid chain; its full sequence is Probable acyl-activating enzyme 8 (544 aa).

Belongs to the ATP-dependent AMP-binding enzyme family. In terms of tissue distribution, expressed at low levels in roots, leaves, stems, flowers and developing seeds.

May act as an acid--thiol ligase that activates carboxylic acids by forming acyl-CoAs. This chain is Probable acyl-activating enzyme 8 (AAE8), found in Arabidopsis thaliana (Mouse-ear cress).